The sequence spans 402 residues: uncharacterized protein (402 aa).

Residues 1-12 (MFQQLSASIRHN) are Cytoplasmic-facing. Residues 13–33 (AHIIFLCISWYFISSLASQVT) traverse the membrane as a helical segment. The Extracellular segment spans residues 34 to 50 (KQVLTVCPLPLFLGEFQ). Residues 51-71 (FIYTAVLAWFTCYIAYSFPGF) form a helical membrane-spanning segment. At 72–103 (YRIFPNGTFPEYYIDDRETSRAARKESKLSSL) the chain is on the cytoplasmic side. A helical transmembrane segment spans residues 104-124 (IIPPSKPILQTVLPLGLFQFV). Topologically, residues 125–134 (GKYFGHTATS) are extracellular. The helical transmembrane segment at 135 to 155 (LVPVSTVASIKTLSPMFILLL) threads the bilayer. Topologically, residues 156–165 (QKILKISTLK) are cytoplasmic. The helical transmembrane segment at 166–186 (ITLTLIFSLCTLVLGVWIIVQ) threads the bilayer. Over 187-206 (EDNRSPASSNELREFSKYGV) the chain is Extracellular. The chain crosses the membrane as a helical span at residues 207–227 (ICAMISMFIFVLQNIYGKTVF). Topologically, residues 228 to 271 (TYRSQTDESQSNSGFSRQESPLPLYEKLDEKLVAKKKPKSYDKL) are cytoplasmic. The helical transmembrane segment at 272–292 (TLMIYISLVGFCLSFGWFITL) threads the bilayer. Residues 293–353 (EFPVLFRYFF…TYSIANLMKR (61 aa)) are Extracellular-facing. The helical transmembrane segment at 354-374 (FAIIAVSWVFIGRRITWLQVF) threads the bilayer. Residues 375–402 (GLVLNTLGLFLYERCTSQSKIKAKIRPE) are Cytoplasmic-facing.

The protein belongs to the TPT transporter family.

The protein localises to the membrane. This is an uncharacterized protein from Saccharomyces cerevisiae (strain ATCC 204508 / S288c) (Baker's yeast).